The sequence spans 470 residues: Angiopoietin-related protein 6 (470 aa).

The signal sequence occupies residues 1 to 20 (MGKPWLRALQLLLLLGASWA). Residue Asn-58 is glycosylated (N-linked (GlcNAc...) asparagine). Residues 59–116 (ASELAALRMRVGRHEELLRELQRLAAADGAVAGEVRALRKESRGLSARLGQLRAQLQH) are a coiled coil. Asn-145 is a glycosylation site (N-linked (GlcNAc...) (complex) asparagine). A disordered region spans residues 214-249 (SDTSRMLDPAPEPQRDQTQRQQEPMASPMPAGHPAV). A Fibrinogen C-terminal domain is found at 251 to 469 (TKPVGPWQDC…KAAMLIRPLK (219 aa)). Intrachain disulfides connect Cys-260–Cys-287 and Cys-410–Cys-423.

It localises to the secreted. In terms of biological role, may play a role in the wound healing process. May promote epidermal proliferation, remodeling and regeneration. May promote the chemotactic activity of endothelial cells and induce neovascularization. May counteract high-fat diet-induced obesity and related insulin resistance through increased energy expenditure. In Homo sapiens (Human), this protein is Angiopoietin-related protein 6 (ANGPTL6).